The primary structure comprises 368 residues: F-box/kelch-repeat protein At5g51250 (368 aa).

In terms of domain architecture, F-box spans 1 to 44; the sequence is MSSLPDDLLLSIFARISRLYYPTLSLVSKSFRSLLASPDLYKAR. Kelch repeat units lie at residues 116–163, 165–218, and 260–304; these read DIYN…VLDR, IYVA…CIDG, and LFYI…YGGK.

The chain is F-box/kelch-repeat protein At5g51250 from Arabidopsis thaliana (Mouse-ear cress).